We begin with the raw amino-acid sequence, 922 residues long: 1,4-alpha-glucan-branching enzyme 1, chloroplastic/amyloplastic (922 aa).

A chloroplast-targeting transit peptide spans 1-47; the sequence is MVYTISGIRFPVLPSLHKSTLRCDRRASSHSFFLKNNSSSFSRTSLY. Positions 83–130 are disordered; sequence LENPDITSEDAQNLEDLTMKDGNKYNIDESTSSYREVGDEKGSVTSSS. Residues 99-109 show a composition bias toward basic and acidic residues; the sequence is LTMKDGNKYNI. Asp-494 acts as the Nucleophile in catalysis. Glu-549 functions as the Proton donor in the catalytic mechanism. Residues 870–922 form a disordered region; sequence VESEPIELSVEEAESEPIERSVEEVESETTQQSVEVESETTQQSVEVESETTQ. A compositionally biased stretch (low complexity) spans 897–922; it reads ETTQQSVEVESETTQQSVEVESETTQ.

It belongs to the glycosyl hydrolase 13 family. GlgB subfamily. As to quaternary structure, monomer. As to expression, expressed in roots, leaves, stipules, pods and flowers.

The protein resides in the plastid. Its subcellular location is the chloroplast. It is found in the amyloplast. It catalyses the reaction Transfers a segment of a (1-&gt;4)-alpha-D-glucan chain to a primary hydroxy group in a similar glucan chain.. It functions in the pathway glycan biosynthesis; starch biosynthesis. Catalyzes the formation of the alpha-1,6-glucosidic linkages in starch by scission of a 1,4-alpha-linked oligosaccharide from growing alpha-1,4-glucan chains and the subsequent attachment of the oligosaccharide to the alpha-1,6 position. May preferentially transfer short chains during branching. Responsible for the synthesis of about 75% of the amylopectin found in the starch granules of mature embryos. In Pisum sativum (Garden pea), this protein is 1,4-alpha-glucan-branching enzyme 1, chloroplastic/amyloplastic (SBEI).